The chain runs to 443 residues: Cell division protein FtsA (443 aa).

The protein belongs to the FtsA/MreB family. As to quaternary structure, self-interacts. Interacts with FtsZ.

The protein localises to the cell inner membrane. Cell division protein that is involved in the assembly of the Z ring. May serve as a membrane anchor for the Z ring. The sequence is that of Cell division protein FtsA from Agrobacterium fabrum (strain C58 / ATCC 33970) (Agrobacterium tumefaciens (strain C58)).